A 592-amino-acid chain; its full sequence is UvrABC system protein C (592 aa).

One can recognise a GIY-YIG domain in the interval 15-92; it reads ALPGCYLMKD…IQKHQPYFNI (78 aa). The UVR domain occupies 197–232; that stretch reads DNVKKDLTEKMATAAQEMQFERAAELRDQLRYIEAT.

This sequence belongs to the UvrC family. As to quaternary structure, interacts with UvrB in an incision complex.

It is found in the cytoplasm. Its function is as follows. The UvrABC repair system catalyzes the recognition and processing of DNA lesions. UvrC both incises the 5' and 3' sides of the lesion. The N-terminal half is responsible for the 3' incision and the C-terminal half is responsible for the 5' incision. The chain is UvrABC system protein C from Latilactobacillus sakei subsp. sakei (strain 23K) (Lactobacillus sakei subsp. sakei).